The primary structure comprises 433 residues: Apolipoprotein L5 (433 aa).

Residues histidine 346 to glutamine 433 are disordered. Residues serine 359–valine 371 show a composition bias toward low complexity. Positions arginine 422–glutamine 433 are enriched in basic residues.

The protein belongs to the apolipoprotein L family. In terms of tissue distribution, low level of expression; detected in uterus, testis, skeletal muscle and stomach.

It is found in the cytoplasm. Its function is as follows. May affect the movement of lipids in the cytoplasm or allow the binding of lipids to organelles. This chain is Apolipoprotein L5 (APOL5), found in Homo sapiens (Human).